We begin with the raw amino-acid sequence, 473 residues long: MKNKFKTQEELVNHLKTVGFVFANSEIYNGLANAWDYGPLGVLLKNNLKNLWWKEFVTKQKDVVGLDSAIILNPLVWKASGHLDNFSDPLIDCKNCKARYRADKLIESFDENIHIAENSSNEEFAKVLNDYEISCPTCKQFNWTEIRHFNLMFKTYQGVIEDAKNVVYLRPETAQGIFVNFKNVQRSMRLHLPFGIAQIGKSFRNEITPGNFIFRTREFEQMEIEFFLKEESAYDIFDKYLNQIENWLVSACGLSLNNLRKHEHPKEELSHYSKKTIDFEYNFLHGFSELYGIAYRTNYDLSVHMNLSKKDLTYFDEQTKEKYVPHVIEPSVGVERLLYAILTEATFIEKLENDDERILMDLKYDLAPYKIAVMPLVNKLKDKAEEIYGKILDLNISATFDNSGSIGKRYRRQDAIGTIYCLTIDFDSLDDQQDPSFTIRERNSMAQKRIKLSELPLYLNQKAHEDFQRQCQK.

Positions 101 and 172 each coordinate substrate. Residues 204–206 (RNE), 214–219 (FRTREF), 289–290 (EL), and 333–336 (GVER) each bind ATP. 219–223 (FEQME) contacts substrate. 329–333 (EPSVG) is a substrate binding site.

It belongs to the class-II aminoacyl-tRNA synthetase family. Homodimer.

The protein resides in the cytoplasm. It catalyses the reaction tRNA(Gly) + glycine + ATP = glycyl-tRNA(Gly) + AMP + diphosphate. In terms of biological role, catalyzes the attachment of glycine to tRNA(Gly). This chain is Glycine--tRNA ligase, found in Ureaplasma urealyticum serovar 10 (strain ATCC 33699 / Western).